The primary structure comprises 501 residues: Glycogenin-2 (501 aa).

5 residues coordinate UDP: L42, T44, N45, Y48, and R110. L42, T44, N45, Y48, R110, K119, D135, A136, D137, N166, S167, D193, D196, and Q197 together coordinate UDP-alpha-D-glucose. UDP-binding residues include D135, A136, and D137. D135 contacts Mn(2+). Residue D137 coordinates Mn(2+). The O-linked (Glc...) tyrosine glycan is linked to Y228. H245, G248, and K251 together coordinate UDP. Mn(2+) is bound at residue H245. Positions 248 and 251 each coordinate UDP-alpha-D-glucose. A phosphoserine mark is found at S368, S399, and S459.

In terms of assembly, homodimer, tightly complexed to glycogen synthase. It depends on Mn(2+) as a cofactor. Post-translationally, self-glycosylated by the transfer of glucose residues from UDP-glucose to itself, forming an alpha-1,4-glycan of around 10 residues attached to Tyr-228. Detected in liver (at protein level). Expressed preferentially in liver, heart, and pancreas.

It localises to the cytoplasm. The protein resides in the nucleus. It carries out the reaction L-tyrosyl-[glycogenin] + UDP-alpha-D-glucose = alpha-D-glucosyl-L-tyrosyl-[glycogenin] + UDP + H(+). It catalyses the reaction [1,4-alpha-D-glucosyl](n)-L-tyrosyl-[glycogenin] + UDP-alpha-D-glucose = [1,4-alpha-D-glucosyl](n+1)-L-tyrosyl-[glycogenin] + UDP + H(+). The protein operates within glycan biosynthesis; glycogen biosynthesis. Glycogenin participates in the glycogen biosynthetic process along with glycogen synthase and glycogen branching enzyme. It catalyzes the formation of a short alpha (1,4)-glucosyl chain covalently attached via a glucose 1-O-tyrosyl linkage to internal tyrosine residues and these chains act as primers for the elongation reaction catalyzed by glycogen synthase. The sequence is that of Glycogenin-2 (GYG2) from Homo sapiens (Human).